The chain runs to 371 residues: tRNA-specific 2-thiouridylase MnmA (371 aa).

ATP-binding positions include 9 to 16 (AMSGGVDS) and Met-35. The Nucleophile role is filled by Cys-109. The cysteines at positions 109 and 207 are disulfide-linked. Gly-133 provides a ligand contact to ATP. The segment at 157-159 (KDQ) is interaction with tRNA. Cys-207 functions as the Cysteine persulfide intermediate in the catalytic mechanism.

This sequence belongs to the MnmA/TRMU family.

The protein localises to the cytoplasm. The catalysed reaction is S-sulfanyl-L-cysteinyl-[protein] + uridine(34) in tRNA + AH2 + ATP = 2-thiouridine(34) in tRNA + L-cysteinyl-[protein] + A + AMP + diphosphate + H(+). In terms of biological role, catalyzes the 2-thiolation of uridine at the wobble position (U34) of tRNA, leading to the formation of s(2)U34. This is tRNA-specific 2-thiouridylase MnmA from Solibacter usitatus (strain Ellin6076).